Consider the following 288-residue polypeptide: Probable chromosome 1-partitioning protein ParB (288 aa).

Belongs to the ParB family.

In terms of biological role, involved in chromosome partition. Localize to both poles of the predivisional cell following completion of DNA replication. Binds to the DNA origin of replication. The polypeptide is Probable chromosome 1-partitioning protein ParB (parB1) (Deinococcus radiodurans (strain ATCC 13939 / DSM 20539 / JCM 16871 / CCUG 27074 / LMG 4051 / NBRC 15346 / NCIMB 9279 / VKM B-1422 / R1)).